The primary structure comprises 140 residues: Nucleoside diphosphate kinase (140 aa).

ATP-binding residues include Lys-11, Phe-59, Arg-87, Thr-93, Arg-104, and Asn-114. The Pros-phosphohistidine intermediate role is filled by His-117.

The protein belongs to the NDK family. As to quaternary structure, homotetramer. Mg(2+) is required as a cofactor.

It is found in the cytoplasm. The catalysed reaction is a 2'-deoxyribonucleoside 5'-diphosphate + ATP = a 2'-deoxyribonucleoside 5'-triphosphate + ADP. It carries out the reaction a ribonucleoside 5'-diphosphate + ATP = a ribonucleoside 5'-triphosphate + ADP. Major role in the synthesis of nucleoside triphosphates other than ATP. The ATP gamma phosphate is transferred to the NDP beta phosphate via a ping-pong mechanism, using a phosphorylated active-site intermediate. The protein is Nucleoside diphosphate kinase of Francisella philomiragia subsp. philomiragia (strain ATCC 25017 / CCUG 19701 / FSC 153 / O#319-036).